The following is a 180-amino-acid chain: Translation initiation factor IF-3 (180 aa).

Belongs to the IF-3 family. In terms of assembly, monomer.

It is found in the cytoplasm. In terms of biological role, IF-3 binds to the 30S ribosomal subunit and shifts the equilibrium between 70S ribosomes and their 50S and 30S subunits in favor of the free subunits, thus enhancing the availability of 30S subunits on which protein synthesis initiation begins. The polypeptide is Translation initiation factor IF-3 (Salmonella paratyphi A (strain ATCC 9150 / SARB42)).